The chain runs to 576 residues: Arginine--tRNA ligase (576 aa).

Positions 122 to 132 (PNVAKEMHVGH) match the 'HIGH' region motif.

This sequence belongs to the class-I aminoacyl-tRNA synthetase family. In terms of assembly, monomer.

The protein resides in the cytoplasm. It catalyses the reaction tRNA(Arg) + L-arginine + ATP = L-arginyl-tRNA(Arg) + AMP + diphosphate. In Mannheimia succiniciproducens (strain KCTC 0769BP / MBEL55E), this protein is Arginine--tRNA ligase.